Reading from the N-terminus, the 983-residue chain is Protein translocase subunit SecA (983 aa).

ATP-binding positions include Gln83, 101–105 (GEGKT), and Asp489. The segment at 948–983 (ISSEEEDNNEKTNINNNEDLERTKGEAQQTAKNPNE) is disordered. A compositionally biased stretch (polar residues) spans 973 to 983 (EAQQTAKNPNE).

This sequence belongs to the SecA family. As to quaternary structure, monomer and homodimer. Part of the essential Sec protein translocation apparatus which comprises SecA, SecYEG and auxiliary proteins SecDF. Other proteins may also be involved.

The protein localises to the cell membrane. The protein resides in the cytoplasm. It carries out the reaction ATP + H2O + cellular proteinSide 1 = ADP + phosphate + cellular proteinSide 2.. In terms of biological role, part of the Sec protein translocase complex. Interacts with the SecYEG preprotein conducting channel. Has a central role in coupling the hydrolysis of ATP to the transfer of proteins into and across the cell membrane, serving as an ATP-driven molecular motor driving the stepwise translocation of polypeptide chains across the membrane. In Mesomycoplasma hyopneumoniae (strain J / ATCC 25934 / NCTC 10110) (Mycoplasma hyopneumoniae), this protein is Protein translocase subunit SecA.